The primary structure comprises 530 residues: Phosphoenolpyruvate carboxykinase (ATP) (530 aa).

Positions 58, 195, and 201 each coordinate substrate. ATP is bound by residues Lys201, His220, and Gly236 to Thr244. Mn(2+)-binding residues include Lys201 and His220. Position 257 (Asp257) interacts with Mn(2+). Residues Glu285, Arg321, Arg440 to Ile441, and Thr446 contribute to the ATP site. Arg321 contributes to the substrate binding site.

This sequence belongs to the phosphoenolpyruvate carboxykinase (ATP) family. It depends on Mn(2+) as a cofactor.

It localises to the cytoplasm. The enzyme catalyses oxaloacetate + ATP = phosphoenolpyruvate + ADP + CO2. It participates in carbohydrate biosynthesis; gluconeogenesis. Functionally, involved in the gluconeogenesis. Catalyzes the conversion of oxaloacetate (OAA) to phosphoenolpyruvate (PEP) through direct phosphoryl transfer between the nucleoside triphosphate and OAA. In Staphylococcus epidermidis (strain ATCC 35984 / DSM 28319 / BCRC 17069 / CCUG 31568 / BM 3577 / RP62A), this protein is Phosphoenolpyruvate carboxykinase (ATP).